A 2273-amino-acid chain; its full sequence is Acetyl-CoA carboxylase, mitochondrial (2273 aa).

The N-terminal 104 residues, Lys-1–Leu-104, are a transit peptide targeting the mitochondrion. The 502-residue stretch at Val-134–Leu-635 folds into the Biotin carboxylation domain. The ATP-grasp domain occupies Lys-292–Met-484. Gly-332–Gly-337 contacts ATP. Arg-459 is a catalytic residue. One can recognise a Biotinyl-binding domain in the interval Leu-763–Thr-837. Lys-804 is subject to N6-biotinyllysine. The CoA carboxyltransferase N-terminal domain maps to Pro-1532–Glu-1867. A carboxyltransferase region spans residues Pro-1532–Lys-2187. The CoA site is built by Arg-1776, Lys-2080, and Arg-2082. The 317-residue stretch at Arg-1871 to Lys-2187 folds into the CoA carboxyltransferase C-terminal domain.

The cofactor is biotin.

The protein resides in the mitochondrion. The catalysed reaction is hydrogencarbonate + acetyl-CoA + ATP = malonyl-CoA + ADP + phosphate + H(+). It carries out the reaction N(6)-biotinyl-L-lysyl-[protein] + hydrogencarbonate + ATP = N(6)-carboxybiotinyl-L-lysyl-[protein] + ADP + phosphate + H(+). It participates in lipid metabolism; malonyl-CoA biosynthesis; malonyl-CoA from acetyl-CoA: step 1/1. Its function is as follows. Catalyzes the rate-limiting reaction in the mitochondrial fatty acid synthesis (FAS) type II pathway. Responsible for the production of the mitochondrial malonyl-CoA, used for the biosynthesis of the cofactor lipoic acid. This protein carries three functions: biotin carboxyl carrier protein, biotin carboxylase, and carboxyltransferase. This Saccharomyces cerevisiae (strain RM11-1a) (Baker's yeast) protein is Acetyl-CoA carboxylase, mitochondrial (HFA1).